A 472-amino-acid polypeptide reads, in one-letter code: MHRVRFAPSPTGFLHIGSARTYIFNWLFARHHGGTMILRIDDTDVGRNSDASETSIFDGLAWLGLDWDEQYRQSERLPLHRAMADAILTKGMAYRDFTPAQAGDSEKSGAQGTWLFNAGMRELSREESDRRAAAGEPFALRFRVPHDREGSVQFTDAVYGEQAKGYGDIEDFALLRSDGMPTYHLANCADDADLRISHIIRGQEHLSNAFKHKLIFDAAGAESPTFAHLPLLMAPDGMKLSKRVHGPVVSVTTYRDAGFLPQAFINFLSLLGWSPKNDREKLSREEMVELFTLEGINRANAVVNFTEEEPFDAKALWLNAEHIRAMPAADLARELLPFVPVDLEKMLQITPLIQERIKLLRDVQSVADFFFVKQLPPYDSAELIPKKGDAAMAKNVLIKACDVLATAEFTHDGLEVALRAASAELGIKAGQMFEPVRVAVCGRKTAPPLFGTLEVLGREACLARIGQAIEKL.

The 'HIGH' region signature appears at 8-18; sequence PSPTGFLHIGS. Positions 239–243 match the 'KMSKS' region motif; it reads KLSKR. Lys242 contributes to the ATP binding site.

It belongs to the class-I aminoacyl-tRNA synthetase family. Glutamate--tRNA ligase type 1 subfamily. As to quaternary structure, monomer.

The protein resides in the cytoplasm. It carries out the reaction tRNA(Glu) + L-glutamate + ATP = L-glutamyl-tRNA(Glu) + AMP + diphosphate. In terms of biological role, catalyzes the attachment of glutamate to tRNA(Glu) in a two-step reaction: glutamate is first activated by ATP to form Glu-AMP and then transferred to the acceptor end of tRNA(Glu). In Solibacter usitatus (strain Ellin6076), this protein is Glutamate--tRNA ligase.